The sequence spans 84 residues: CDC42 small effector protein 2-A (84 aa).

S-palmitoyl cysteine attachment occurs at residues Cys10 and Cys11. A CRIB domain is found at 29–42 (IGEPTNFVHTAHVG).

Belongs to the CDC42SE/SPEC family.

It is found in the cytoplasm. The protein resides in the cytoskeleton. The protein localises to the cell membrane. In terms of biological role, probably involved in the organization of the actin cytoskeleton by acting downstream of CDC42, inducing actin filament assembly. The chain is CDC42 small effector protein 2-A (cdc42se2-A) from Xenopus tropicalis (Western clawed frog).